A 164-amino-acid chain; its full sequence is uncharacterized protein (164 aa).

This is an uncharacterized protein from Methanocaldococcus jannaschii (strain ATCC 43067 / DSM 2661 / JAL-1 / JCM 10045 / NBRC 100440) (Methanococcus jannaschii).